Reading from the N-terminus, the 445-residue chain is Histamine H3 receptor (445 aa).

Residues 1-39 (MERAPPDGPLNASGALAGEAAAAGGARGFSAAWTAVLAA) lie on the Extracellular side of the membrane. The N-linked (GlcNAc...) asparagine glycan is linked to Asn11. Residues 40-60 (LMALLIVATVLGNALVMLAFV) traverse the membrane as a helical segment. Residues 61–70 (ADSSLRTQNN) lie on the Cytoplasmic side of the membrane. The chain crosses the membrane as a helical span at residues 71–91 (FFLLNLAISDFLVGAFCIPLY). The Extracellular segment spans residues 92–108 (VPYVLTGRWTFGRGLCK). Residues Cys107 and Cys188 are joined by a disulfide bond. Residues 109 to 129 (LWLVVDYLLCTSSAFNIVLIS) traverse the membrane as a helical segment. Topologically, residues 130 to 156 (YDRFLSVTRAVSYRAQQGDTRRAVRKM) are cytoplasmic. A helical transmembrane segment spans residues 157-177 (LLVWVLAFLLYGPAILSWEYL). Over 178–196 (SGGSSIPEGHCYAEFFYNW) the chain is Extracellular. A helical transmembrane segment spans residues 197 to 217 (YFLITASTLEFFTPFLSVTFF). Residues 218–359 (NLSIYLNIQR…LSRDRKVAKS (142 aa)) are Cytoplasmic-facing. Disordered stretches follow at residues 237–260 (REAA…GCWG) and 288–336 (EATL…LEKR). A compositionally biased stretch (pro residues) spans 242–257 (PEPPPEAQPSPPPPPG). The segment covering 290-299 (TLGGGGGGGS) has biased composition (gly residues). Over residues 300–312 (VASPTSSSGSSSR) the composition is skewed to low complexity. The helical transmembrane segment at 360–380 (LAVIVSIFGLCWAPYTLLMII) threads the bilayer. At 381-395 (RAACHGHCVPDYWYE) the chain is on the extracellular side. The chain crosses the membrane as a helical span at residues 396-416 (TSFWLLWANSAVNPVLYPLCH). The Cytoplasmic segment spans residues 417–445 (HSFRRAFTKLLCPQKLKIQPHSSLEHCWK). A Phosphoserine modification is found at Ser439.

This sequence belongs to the G-protein coupled receptor 1 family. Expressed predominantly in the CNS, with the greatest expression in the thalamus and caudate nucleus. The various isoforms are mainly coexpressed in brain, but their relative expression level varies in a region-specific manner. Isoform 3 and isoform 7 are highly expressed in the thalamus, caudate nucleus and cerebellum while isoform 5 and isoform 6 show a poor expression. Isoform 5 and isoform 6 show a high expression in the amygdala, substantia nigra, cerebral cortex and hypothalamus. Isoform 7 is not found in hypothalamus or substantia nigra.

It is found in the cell membrane. Functionally, the H3 subclass of histamine receptors could mediate the histamine signals in CNS and peripheral nervous system. Signals through the inhibition of adenylate cyclase and displays high constitutive activity (spontaneous activity in the absence of agonist). Agonist stimulation of isoform 3 neither modified adenylate cyclase activity nor induced intracellular calcium mobilization. The chain is Histamine H3 receptor (HRH3) from Homo sapiens (Human).